A 178-amino-acid chain; its full sequence is Caveolin-1 (178 aa).

Ser-2 carries the post-translational modification N-acetylserine. At Ser-2 the chain carries Phosphoserine. Residues 2–94 (SGGKYIDSEG…WKASFTTFTV (93 aa)) are required for homooligomerization. Residues 2–104 (SGGKYIDSEG…TKYWFYRLLS (103 aa)) lie on the Cytoplasmic side of the membrane. The residue at position 5 (Lys-5) is an N6-acetyllysine; alternate. Lys-5 is covalently cross-linked (Glycyl lysine isopeptide (Lys-Gly) (interchain with G-Cter in ubiquitin); alternate). Tyr-6 carries the phosphotyrosine modification. Ser-9 is modified (phosphoserine). At Tyr-14 the chain carries Phosphotyrosine; by ABL1. Position 25 is a phosphotyrosine (Tyr-25). Residues Lys-26, Lys-30, Lys-39, Lys-47, and Lys-57 each participate in a glycyl lysine isopeptide (Lys-Gly) (interchain with G-Cter in ubiquitin) cross-link. An interaction with CAVIN3 region spans residues 82 to 94 (DGIWKASFTTFTV). Residues 105 to 125 (ALFGIPMALIWGIYFAILSFL) constitute an intramembrane region (helical). At 126–178 (HIWAVVPCIRSYLIEIQCISRIYSICIHTFCDPLFEAIGKIFSNVRIALQKEI) the chain is on the cytoplasmic side. The segment at 131–142 (VPCIRSYLIEIQ) is interacts with SPRY1, SPRY2, SPRY3 and SPRY4. 3 S-palmitoyl cysteine lipidation sites follow: Cys-133, Cys-143, and Cys-156. Residues 149–160 (SICIHTFCDPLF) form an interacts with SPRY1, SPRY2, and SPRY4 region. Residues 167–178 (FSNVRIALQKEI) are interacts with SPRY1, SPRY2, SPRY3 and SPRY4.

It belongs to the caveolin family. As to quaternary structure, homooligomer. Interacts with GLIPR2. Interacts with NOSTRIN. Interacts with SNAP25 and STX1A. Interacts (via the N-terminus) with DPP4; the interaction is direct. Interacts with CTNNB1, CDH1 and JUP. Interacts with PACSIN2; this interaction induces membrane tubulation. Interacts with SLC7A9. Interacts with BMX and BTK. Interacts with TGFBR1. Interacts with CAVIN3 (via leucine-zipper domain) in a cholesterol-sensitive manner. Interacts with CAVIN1. Interacts with EHD2 in a cholesterol-dependent manner. Forms a ternary complex with UBXN6 and VCP; mediates CAV1 targeting to lysosomes for degradation. Interacts with ABCG1; this interaction regulates ABCG1-mediated cholesterol efflux. Interacts with NEU3; this interaction enhances NEU3 sialidase activity within caveola. Interacts (via C-terminus) with SPRY1, SPRY2 (via C-terminus), SPRY3, and SPRY4. Interacts with IGFBP5; this interaction allows trafficking of IGFBP5 from the plasma membrane to the nucleus. Phosphorylated at Tyr-14 by ABL1 in response to oxidative stress. In terms of processing, ubiquitinated. Undergo monoubiquitination and multi- and/or polyubiquitination. Monoubiquitination of N-terminal lysines promotes integration in a ternary complex with UBXN6 and VCP which promotes oligomeric CAV1 targeting to lysosomes for degradation. Ubiquitinated by ZNRF1; leading to degradation and modulation of the TLR4-mediated immune response.

The protein localises to the golgi apparatus membrane. It localises to the cell membrane. It is found in the membrane. The protein resides in the caveola. Its subcellular location is the membrane raft. In terms of biological role, may act as a scaffolding protein within caveolar membranes. Forms a stable heterooligomeric complex with CAV2 that targets to lipid rafts and drives caveolae formation. Mediates the recruitment of CAVIN proteins (CAVIN1/2/3/4) to the caveolae. Interacts directly with G-protein alpha subunits and can functionally regulate their activity. Involved in the costimulatory signal essential for T-cell receptor (TCR)-mediated T-cell activation. Its binding to DPP4 induces T-cell proliferation and NF-kappa-B activation in a T-cell receptor/CD3-dependent manner. Recruits CTNNB1 to caveolar membranes and may regulate CTNNB1-mediated signaling through the Wnt pathway. Negatively regulates TGFB1-mediated activation of SMAD2/3 by mediating the internalization of TGFBR1 from membrane rafts leading to its subsequent degradation. Binds 20(S)-hydroxycholesterol (20(S)-OHC). The chain is Caveolin-1 (CAV1) from Didelphis virginiana (North American opossum).